The chain runs to 604 residues: Threonine--tRNA ligase (604 aa).

A catalytic region spans residues 209 to 500 (DHRKLGQEMG…LTEHFGGEFP (292 aa)). 3 residues coordinate Zn(2+): cysteine 301, histidine 352, and histidine 477.

This sequence belongs to the class-II aminoacyl-tRNA synthetase family. In terms of assembly, homodimer. The cofactor is Zn(2+).

The protein localises to the cytoplasm. It catalyses the reaction tRNA(Thr) + L-threonine + ATP = L-threonyl-tRNA(Thr) + AMP + diphosphate + H(+). Catalyzes the attachment of threonine to tRNA(Thr) in a two-step reaction: L-threonine is first activated by ATP to form Thr-AMP and then transferred to the acceptor end of tRNA(Thr). Also edits incorrectly charged L-seryl-tRNA(Thr). The polypeptide is Threonine--tRNA ligase (Helicobacter hepaticus (strain ATCC 51449 / 3B1)).